The sequence spans 203 residues: Kunitz trypsin inhibitor 6 (203 aa).

An N-terminal signal peptide occupies residues 1-21 (MKTFQLMMISFLFVAITTTSG). A disulfide bridge links Cys-70 with Cys-115. 5 N-linked (GlcNAc...) asparagine glycosylation sites follow: Asn-94, Asn-127, Asn-136, Asn-144, and Asn-197.

It belongs to the protease inhibitor I3 (leguminous Kunitz-type inhibitor) family.

Exhibits Kunitz trypsin protease inhibitor activity. This Arabidopsis thaliana (Mouse-ear cress) protein is Kunitz trypsin inhibitor 6.